The sequence spans 168 residues: uncharacterized protein (168 aa).

Residues 1–15 (MKRIISSSKSLKQLS) are compositionally biased toward low complexity. The segment at 1 to 107 (MKRIISSSKS…NNNNNNNNNN (107 aa)) is disordered. Residues 33–47 (SDSDSDSDSDSDSDS) show a composition bias toward acidic residues. A compositionally biased stretch (low complexity) spans 48–107 (DSNSNSNSNSNSNSNSNSNSNSNSNSNNNNNNTNNNNNNNNNNNNNNNNNNNNNNNNNNN).

This is an uncharacterized protein from Dictyostelium discoideum (Social amoeba).